An 830-amino-acid chain; its full sequence is Serine/threonine-protein kinase atg1 (830 aa).

The Protein kinase domain maps to 14 to 307; it reads YVIRSEIGRG…YDGFFSSIVV (294 aa). Residues 20–28 and Lys43 contribute to the ATP site; that span reads IGRGSFAIV. Asp157 functions as the Proton acceptor in the catalytic mechanism. Ser346 is subject to Phosphoserine. Over residues 448-468 the composition is skewed to polar residues; sequence TQLSNESLTHEQSINGNSPSP. Positions 448 to 480 are disordered; that stretch reads TQLSNESLTHEQSINGNSPSPNEGVFQGSFSPE.

This sequence belongs to the protein kinase superfamily. Ser/Thr protein kinase family. APG1/unc-51/ULK1 subfamily. Homodimer. Component of the atg1 kinase complex composed of at least atg1, atg13, atg17 and atg101. Interacts directly with atg13. Phosphorylated. Dephosphorylated under depletion of nitrogen.

It catalyses the reaction L-seryl-[protein] + ATP = O-phospho-L-seryl-[protein] + ADP + H(+). The enzyme catalyses L-threonyl-[protein] + ATP = O-phospho-L-threonyl-[protein] + ADP + H(+). Serine/threonine protein kinase involved in the cytoplasm to vacuole transport (Cvt) and found to be essential in autophagy, where it is required for the formation of autophagosomes. Involved in the clearance of protein aggregates which cannot be efficiently cleared by the proteasome. Required for selective autophagic degradation of the nucleus (nucleophagy) as well as for mitophagy which contributes to regulate mitochondrial quantity and quality by eliminating the mitochondria to a basal level to fulfill cellular energy requirements and preventing excess ROS production. Also involved in endoplasmic reticulum-specific autophagic process, in selective removal of ER-associated degradation (ERAD) substrates. Plays a key role in ATG9 and ATG23 cycling through the pre-autophagosomal structure and is necessary to promote ATG18 binding to ATG9 through phosphorylation of ATG9. Catalyzes phosphorylation of ATG4, decreasing the interaction between ATG4 and ATG8 and impairing deconjugation of PE-conjugated forms of ATG8. Autophagy functions to supply nitrogen and is activated when cells cannot access exogenous nitrogen, thus ensuring that they can adapt and subsequently propagate. Finally, atg13 is also required for glycogen storage during stationary phase and has a role in meiosis and sporulation. The polypeptide is Serine/threonine-protein kinase atg1 (Schizosaccharomyces pombe (strain 972 / ATCC 24843) (Fission yeast)).